The following is a 224-amino-acid chain: 4-aminobenzoate synthase (224 aa).

6 residues coordinate Fe(2+): E77, H84, E138, H169, D173, and H176.

This sequence belongs to the CADD family. In terms of assembly, homodimer. Fe(2+) is required as a cofactor. Mn(2+) serves as cofactor.

Functionally, involved in de novo para-aminobenzoate (PABA) biosynthesis. Acts as a self-sacrificing or 'suicide' enzyme that utilizes its own active site tyrosine residue(s) as the substrate for PABA synthesis. The side chain of the tyrosine residue is released from the protein backbone via cleavage of the C(alpha)-C(beta) bond, leaving a glycine in place of the original tyrosine residue. Reaction requires O(2) and a reduced dimetal cofactor. The polypeptide is 4-aminobenzoate synthase (Chlamydia pneumoniae (Chlamydophila pneumoniae)).